Here is a 237-residue protein sequence, read N- to C-terminus: Putative N-acetylmannosamine-6-phosphate 2-epimerase (237 aa).

The protein belongs to the NanE family.

It carries out the reaction an N-acyl-D-glucosamine 6-phosphate = an N-acyl-D-mannosamine 6-phosphate. It participates in amino-sugar metabolism; N-acetylneuraminate degradation; D-fructose 6-phosphate from N-acetylneuraminate: step 3/5. Its function is as follows. Converts N-acetylmannosamine-6-phosphate (ManNAc-6-P) to N-acetylglucosamine-6-phosphate (GlcNAc-6-P). In Listeria monocytogenes serotype 4a (strain HCC23), this protein is Putative N-acetylmannosamine-6-phosphate 2-epimerase.